A 479-amino-acid polypeptide reads, in one-letter code: Solute carrier family 46 member 2 (479 aa).

Over 1–23 (MGPGGTCPWSSRLSGFRVRTWIE) the chain is Cytoplasmic. A helical transmembrane segment spans residues 24 to 44 (PVVASTQVAGSLYDAGLLLVV). Residues 45–80 (KESFKSEAGGSSNYSANQSLVEYQEDQQQKAISNFN) lie on the Extracellular side of the membrane. N-linked (GlcNAc...) asparagine glycosylation is found at N57 and N61. A helical transmembrane segment spans residues 81–101 (IIYNLVLGLTPLLSAYGLGWL). Topologically, residues 102–110 (SDRYHRKIS) are cytoplasmic. Residues 111-131 (ICTAMLGFLLSRIGLLLKVML) traverse the membrane as a helical segment. Over 132–140 (DWPVEVMYG) the chain is Extracellular. A helical transmembrane segment spans residues 141–161 (AAALNGLCGSFSAYWSGVMAL). Residues 162 to 174 (GSLGCSEGRRSVR) lie on the Cytoplasmic side of the membrane. A helical membrane pass occupies residues 175–195 (LILIDLVLGLAGFSGSMASGH). Residues 196–207 (LFKQIVGHSAQG) are Extracellular-facing. A helical transmembrane segment spans residues 208-228 (LLLTACSVGCAAFALFYSLFV). Residues 229-281 (LKVPESKPNKVHPTVDTVSGMMGTYRTLDPDQQDKQNVPRNPRTPGKGKSSQR) are Cytoplasmic-facing. A disordered region spans residues 255–277 (TLDPDQQDKQNVPRNPRTPGKGK). The chain crosses the membrane as a helical span at residues 282 to 302 (EVVALLFVGAIIYDLAAVGTV). The Extracellular portion of the chain corresponds to 303 to 321 (DVMALFVLKEPLHWNQVQL). A helical transmembrane segment spans residues 322–342 (GYGMASGYIIFITSFLGVLVF). Over 343-348 (SRCFRD) the chain is Cytoplasmic. The helical transmembrane segment at 349–369 (TTMIIIGMLSFGSGALLLAFV) threads the bilayer. Residues 370 to 371 (KE) lie on the Extracellular side of the membrane. The helical transmembrane segment at 372-392 (TYMFYIARAIMLFALIPITTI) threads the bilayer. The Cytoplasmic portion of the chain corresponds to 393–407 (RSAMSKLIKDSSYGK). Residues 408 to 428 (IFVILQLCLTLTGVVTSTIYN) form a helical membrane-spanning segment. At 429-441 (KIYQLTLDKFIGT) the chain is on the extracellular side. A helical transmembrane segment spans residues 442–462 (CFVLSSFLSFLAIVPIGVVAY). Residues 463 to 479 (KQVPRSQQGECAEKQRS) are Cytoplasmic-facing.

The protein belongs to the major facilitator superfamily. SLC46A family. In terms of processing, glycosylated. As to expression, expressed on cortical epithelial cells in the thymus. Mainly expressed in the thymic cortex and is highly enriched in SCID thymus. Also expressed in lymph nodes, heart, fetal liver, brain, spleen, intestine and kidney, but not in adult liver, skin, skeletal muscle and lung. Expressed in skin epidermis.

The protein resides in the endosome membrane. The protein localises to the cell membrane. The catalysed reaction is N-acetyl-beta-D-glucosaminyl-(1-&gt;4)-1,6-anhydro-N-acetyl-beta-D-muramoyl-L-alanyl-gamma-D-glutamyl-meso-2,6-diaminopimeloyl-D-alanine(out) + n H(+)(out) = N-acetyl-beta-D-glucosaminyl-(1-&gt;4)-1,6-anhydro-N-acetyl-beta-D-muramoyl-L-alanyl-gamma-D-glutamyl-meso-2,6-diaminopimeloyl-D-alanine(in) + n H(+)(in). It catalyses the reaction L-alanyl-gamma-D-glutamyl-meso-2,6-diaminopimelate(out) + n H(+)(out) = L-alanyl-gamma-D-glutamyl-meso-2,6-diaminopimelate(in) + n H(+)(in). It carries out the reaction N-acetyl-D-muramoyl-L-alanyl-D-isoglutamine(out) + n H(+)(out) = N-acetyl-D-muramoyl-L-alanyl-D-isoglutamine(in) + n H(+)(in). The enzyme catalyses 2',3'-cGAMP(out) + n H(+)(out) = 2',3'-cGAMP(in) + n H(+)(in). The catalysed reaction is 3',3'-cGAMP(out) + n H(+)(out) = 3',3'-cGAMP(in) + n H(+)(in). Its activity is regulated as follows. Down-regulated by the anti-inflammatory drug methotrexate. Its function is as follows. Proton-coupled transporter that delivers pathogen-associated or danger-associated molecular patterns to cytosolic pattern recognition receptors as part of the innate immune response to microbes or tissue injury. Has selectivity toward muropeptides that contain the amino acid diaminopimelic acid (DAP-type peptidoglycan muropeptides) including Tri-DAP and tracheal toxin (TCT), common in Gram-negative bacteria and Gram-positive bacilli. In the context of immune recognition of skin microbiota, shuttles bacterial muropeptides across the endolysosomal membranes into the cytosol for recognition by NOD1, triggering MYD88-dependent secretion of IL1A and neutrophil recruitment in a pyroptosis-type inflammatory process. To a lesser extent and redundantly, transports muramyl dipeptides derived from most bacterial proteoglycans, eliciting NOD2 receptor activation and downstream inflammatory responses. Postulated to function as an importer of cyclic GMP-AMP dinucleotides (cGAMPs) in monocyte and macrophage cell lineages. Selectively imports cGAMPs derived from pathogenic bacteria such as 3'3'-cGAMP thus providing for differential immune recognition of pathogenic versus commensal bacteria. During tumorigenesis may transport extracellular tumor-derived 2'3'-cGAMP across the plasma membrane of M1-polarized macrophages to activate the anti-tumoral stimulator of interferon genes (STING) pathway. The transport mechanism, its electrogenicity and stoichiometry remain to be elucidated. The chain is Solute carrier family 46 member 2 from Mus musculus (Mouse).